The chain runs to 450 residues: MKTVTEFQNKNILVLGIAKSGYAAATLLQKLGANVIVNDGKPLAENVLAAELQAKGMDVVCGGHPLELLERNISLVVKNPGIPYSNPILVAAKEKQIPIVTEVELAYRISEAPFVGITGSNGKTTTTMLTFEMLKEGQKHPVIAGNIGTVACEVAQDAKENEVVVTELSSFQLMGVELFQPKIAAFLNLFEAHLDYHGTKKEYGLAKANIFKNXTENDYSVINADDADVMALSAYSKGQKVLFSTTKEIEDGACIKDNALYFKGEKVVEVGDIVLPGQHNLENILAAMSIAKLLGVSNEAITAVLKRFTGVKHRLEYVTTINNRKFYNDSKATNMLATEKALSAFTQPTVLLAGGLDRGNEFDDLIPYFKNVKAIVTFGQTAPKLVRAAEKAGLDTIESVDTLDEAVVKAYAHSTDGDVILLSPACASWDQFKTFEERGDIFIQAVHKLI.

Residue 119 to 125 participates in ATP binding; that stretch reads GSNGKTT.

It belongs to the MurCDEF family.

The protein resides in the cytoplasm. It catalyses the reaction UDP-N-acetyl-alpha-D-muramoyl-L-alanine + D-glutamate + ATP = UDP-N-acetyl-alpha-D-muramoyl-L-alanyl-D-glutamate + ADP + phosphate + H(+). The protein operates within cell wall biogenesis; peptidoglycan biosynthesis. In terms of biological role, cell wall formation. Catalyzes the addition of glutamate to the nucleotide precursor UDP-N-acetylmuramoyl-L-alanine (UMA). The protein is UDP-N-acetylmuramoylalanine--D-glutamate ligase of Bacillus cereus (strain ATCC 10987 / NRS 248).